Consider the following 358-residue polypeptide: MSKTNYSVAVLAGDGIGPEIMAAAEQVLDAVSNKFGFTLNREHHAIGGAAIDKHGKALPQSTVTACENADAILFGAVGGPKWEHLPPDEQPERGSLLPLRKHFGLFCNLRPAQLLPALSTASPLRADISEQGFDILCVRELTGGIYFGEKGRSGEGENESAFDTQRYSRKEIERIARFAFEAAKLRSSHVTSVDKANVLASSVLWREVVTEVSKDYPEVKLDYIYVDNAAMQLVKQPSQFDVLLCDNLFGDILSDECAMITGSMGLLPSASLNQSGFGLYEPAGGSAPDIAGKGVANPIAQILSAALMLRYSLGQDEAARTIEKAVAEAVAAGVGTPDIFPNAGYTTNDVAAAIVARI.

79–92 (GPKWEHLPPDEQPE) contributes to the NAD(+) binding site. Residues Arg-100, Arg-110, Arg-139, and Asp-227 each contribute to the substrate site. Mg(2+) contacts are provided by Asp-227, Asp-251, and Asp-255. 285-297 (GSAPDIAGKGVAN) is an NAD(+) binding site.

This sequence belongs to the isocitrate and isopropylmalate dehydrogenases family. LeuB type 1 subfamily. In terms of assembly, homodimer. Mg(2+) is required as a cofactor. Mn(2+) serves as cofactor.

The protein localises to the cytoplasm. It carries out the reaction (2R,3S)-3-isopropylmalate + NAD(+) = 4-methyl-2-oxopentanoate + CO2 + NADH. Its pathway is amino-acid biosynthesis; L-leucine biosynthesis; L-leucine from 3-methyl-2-oxobutanoate: step 3/4. In terms of biological role, catalyzes the oxidation of 3-carboxy-2-hydroxy-4-methylpentanoate (3-isopropylmalate) to 3-carboxy-4-methyl-2-oxopentanoate. The product decarboxylates to 4-methyl-2 oxopentanoate. The polypeptide is 3-isopropylmalate dehydrogenase (Pseudoalteromonas translucida (strain TAC 125)).